The sequence spans 129 residues: NADH-quinone oxidoreductase subunit K 2 (129 aa).

3 consecutive transmembrane segments (helical) span residues 3–23, 28–48, and 68–88; these read LAYP…GVLA, ILVL…LVAF, and LFTI…VLAV. A disordered region spans residues 98-129; the sequence is DKLRDTAEGPEPDGPGTDGSAPTAAEKAEATA. Residues 111-122 are compositionally biased toward low complexity; that stretch reads GPGTDGSAPTAA.

This sequence belongs to the complex I subunit 4L family. NDH-1 is composed of 14 different subunits. Subunits NuoA, H, J, K, L, M, N constitute the membrane sector of the complex.

The protein localises to the cell membrane. The catalysed reaction is a quinone + NADH + 5 H(+)(in) = a quinol + NAD(+) + 4 H(+)(out). In terms of biological role, NDH-1 shuttles electrons from NADH, via FMN and iron-sulfur (Fe-S) centers, to quinones in the respiratory chain. The immediate electron acceptor for the enzyme in this species is believed to be a menaquinone. Couples the redox reaction to proton translocation (for every two electrons transferred, four hydrogen ions are translocated across the cytoplasmic membrane), and thus conserves the redox energy in a proton gradient. The protein is NADH-quinone oxidoreductase subunit K 2 of Streptomyces avermitilis (strain ATCC 31267 / DSM 46492 / JCM 5070 / NBRC 14893 / NCIMB 12804 / NRRL 8165 / MA-4680).